We begin with the raw amino-acid sequence, 449 residues long: Allantoinase (449 aa).

Residues His61, His63, Lys148, His184, His240, and Asp313 each coordinate Zn(2+). An N6-carboxylysine modification is found at Lys148.

This sequence belongs to the metallo-dependent hydrolases superfamily. Allantoinase family. Homotetramer. Zn(2+) serves as cofactor. Post-translationally, carboxylation allows a single lysine to coordinate two zinc ions.

The enzyme catalyses (S)-allantoin + H2O = allantoate + H(+). The protein operates within nitrogen metabolism; (S)-allantoin degradation; allantoate from (S)-allantoin: step 1/1. Functionally, catalyzes the conversion of allantoin (5-ureidohydantoin) to allantoic acid by hydrolytic cleavage of the five-member hydantoin ring. This chain is Allantoinase, found in Desulfitobacterium hafniense (strain Y51).